Here is an 808-residue protein sequence, read N- to C-terminus: Probable inorganic carbon transporter subunit DabA (808 aa).

4 residues coordinate Zn(2+): cysteine 335, aspartate 337, histidine 497, and cysteine 512.

Belongs to the inorganic carbon transporter (TC 9.A.2) DabA family. As to quaternary structure, forms a complex with DabB. Requires Zn(2+) as cofactor.

It is found in the cell inner membrane. Part of an energy-coupled inorganic carbon pump. The sequence is that of Probable inorganic carbon transporter subunit DabA from Rhodopseudomonas palustris (strain TIE-1).